The sequence spans 465 residues: Ribulose bisphosphate carboxylase large chain (465 aa).

Lysine 4 is modified (N6,N6,N6-trimethyllysine). The substrate site is built by asparagine 113 and threonine 163. Lysine 165 functions as the Proton acceptor in the catalytic mechanism. Lysine 167 serves as a coordination point for substrate. Lysine 191, aspartate 193, and glutamate 194 together coordinate Mg(2+). Lysine 191 bears the N6-carboxylysine mark. The active-site Proton acceptor is histidine 284. Substrate-binding residues include arginine 285, histidine 317, and serine 369.

Belongs to the RuBisCO large chain family. Type I subfamily. Heterohexadecamer of 8 large chains and 8 small chains; disulfide-linked. The disulfide link is formed within the large subunit homodimers. The cofactor is Mg(2+). Post-translationally, the disulfide bond which can form in the large chain dimeric partners within the hexadecamer appears to be associated with oxidative stress and protein turnover.

Its subcellular location is the plastid. The protein localises to the chloroplast. It catalyses the reaction 2 (2R)-3-phosphoglycerate + 2 H(+) = D-ribulose 1,5-bisphosphate + CO2 + H2O. The catalysed reaction is D-ribulose 1,5-bisphosphate + O2 = 2-phosphoglycolate + (2R)-3-phosphoglycerate + 2 H(+). Its function is as follows. RuBisCO catalyzes two reactions: the carboxylation of D-ribulose 1,5-bisphosphate, the primary event in carbon dioxide fixation, as well as the oxidative fragmentation of the pentose substrate in the photorespiration process. Both reactions occur simultaneously and in competition at the same active site. The protein is Ribulose bisphosphate carboxylase large chain of Cyrilla racemiflora (Swamp titi).